A 919-amino-acid polypeptide reads, in one-letter code: Glutamate receptor ionotropic, kainate 3 (919 aa).

Residues 1–31 (MTAPWRRLRSLVWEYWAGFLVCAFWIPDSRG) form the signal peptide. Residues 32–563 (MPHVIRIGGI…VFSFLNPLSP (532 aa)) are Extracellular-facing. N-linked (GlcNAc...) asparagine glycans are attached at residues N70, N76, N278, N381, N415, N426, and N433. The cysteines at positions 99 and 350 are disulfide-linked. L-glutamate contacts are provided by P518, T520, and R525. Residues N548 and N551 are each glycosylated (N-linked (GlcNAc...) asparagine). Residues 564-584 (DIWMYVLLAYLGVSCVLFVIA) form a helical membrane-spanning segment. Over 585–636 (RFSPYEWYDAHPCNPGSEVVENNFTLLNSFWFGMGSLMQQGSELMPKALSTR) the chain is Cytoplasmic. A helical transmembrane segment spans residues 637 to 657 (IIGGIWWFFTLIIISSYTANL). The Extracellular portion of the chain corresponds to 658–820 (AAFLTVERME…KEASALGIQK (163 aa)). Residues A691, T692, and E739 each coordinate L-glutamate. An N-linked (GlcNAc...) asparagine glycan is attached at N752. Residues 821-841 (IGGIFIVLAAGLVLSVLVAVG) form a helical membrane-spanning segment. The Cytoplasmic portion of the chain corresponds to 842-919 (EFIYKLRKTA…CSTSLAPVFP (78 aa)). At S869 the chain carries Phosphoserine. A Glycyl lysine isopeptide (Lys-Gly) (interchain with G-Cter in SUMO1) cross-link involves residue K887.

Belongs to the glutamate-gated ion channel (TC 1.A.10.1) family. GRIK3 subfamily. Homotetramer, and heterotetramer with either GRIK4 or GRIK5. Can form functional heteromeric receptors with GRIK2. Interacts with PRKCABP. Interacts with NETO2. Detected in whole brain, cerebellum, brain cortex and hippocampus.

It localises to the cell membrane. The protein resides in the postsynaptic cell membrane. It carries out the reaction Ca(2+)(in) = Ca(2+)(out). Glutamate-gated receptor activity inhibited by spermine. In terms of biological role, ionotropic glutamate receptor that functions as a cation-permeable ligand-gated ion channel, gated by L-glutamate and the glutamatergic agonist kainic acid. Binding of the excitatory neurotransmitter L-glutamate induces a conformation change, leading to the opening of the cation channel, and thereby converts the chemical signal to an electrical impulse. The receptor then desensitizes rapidly and enters a transient inactive state, characterized by the presence of bound agonist. In association with GRIK2, involved in presynaptic facilitation of glutamate release at hippocampal mossy fiber synapses. This Mus musculus (Mouse) protein is Glutamate receptor ionotropic, kainate 3 (Grik3).